The primary structure comprises 94 residues: Protein LURE 1.1 (94 aa).

The signal sequence occupies residues 1-19 (MKLIFIFLTLLIFVSSCTS). 3 disulfides stabilise this stretch: Cys58/Cys75, Cys61/Cys82, and Cys65/Cys84. Residues 67-87 (RRDRYIRTCSFERKLCRCSYS) are PRK6 binding.

This sequence belongs to the DEFL family. As to quaternary structure, binds to PRK6 LRRs. Expressed in the pistil. Detected exclusively in the synergid cells.

Its subcellular location is the secreted. In terms of biological role, pollen tube attractants guiding pollen tubes to the ovular micropyle. This is Protein LURE 1.1 from Arabidopsis thaliana (Mouse-ear cress).